The sequence spans 186 residues: Elongation factor P (186 aa).

The protein belongs to the elongation factor P family.

It is found in the cytoplasm. It functions in the pathway protein biosynthesis; polypeptide chain elongation. Functionally, involved in peptide bond synthesis. Stimulates efficient translation and peptide-bond synthesis on native or reconstituted 70S ribosomes in vitro. Probably functions indirectly by altering the affinity of the ribosome for aminoacyl-tRNA, thus increasing their reactivity as acceptors for peptidyl transferase. The polypeptide is Elongation factor P (Streptococcus sanguinis (strain SK36)).